The chain runs to 191 residues: MSETTLPDYLTVATELQSASLAVNPAEMHGLLTGMLSGGLNLADKSWQPLIFDYTNEGMGWPDRALTLAEATLKVTTSEITGSGMELSMLLPDEDASASLFDLADGVSDWINHFISGLGLVGAQLNKASDGTKEALADLEEMAKLGIDEDDDMEEQAQLLEHVIEHVKACALTIHAEFGARPSEDAAPTIH.

The protein belongs to the UPF0149 family.

This Vibrio atlanticus (strain LGP32) (Vibrio splendidus (strain Mel32)) protein is UPF0149 protein VS_2635.